The following is a 382-amino-acid chain: MSVTDKRDEMSTARDKFAESQQEFESYADEFAADITAKQDDVSDLVDAITDFQAEMTNTTDAFHTYGDEFAAEVDHLRADIDAQRDVIREMQDAFEAYADIFATDIADKQDIGNLLAAIEALRTEMNSTHGAFEAYADDFAADVAALRDISDLVAAIDDFQEEFIAVQDAFDNYAGDFDAEIDQLHAAIADQHDSFDATADAFAEYRDEFYRIEVEALLEAINDFQQDIGDFRAEFETTEDAFVAFARDFYGHEITAEEGAAEAEAEPVEADADVEAEAEVSPDEAGGESAGTEEEETEPAEVETAAPEVEGSPADTADEAEDTEAEEETEEEAPEDMVQCRVCGEYYQAITEPHLQTHDMTIQEYRDEYGEDVPLRPDDKT.

Basic and acidic residues predominate over residues 1 to 18; sequence MSVTDKRDEMSTARDKFA. Positions 1-21 are disordered; sequence MSVTDKRDEMSTARDKFAESQ. Tandem repeats lie at residues 22-60, 61-92, 93-130, 131-168, 169-200, 201-240, and 241-284. The interval 22–284 is 7 X approximate tandem repeats; that stretch reads QEFESYADEF…VEAEAEVSPD (263 aa). Positions 260–302 are enriched in acidic residues; it reads GAAEAEAEPVEADADVEAEAEVSPDEAGGESAGTEEEETEPAE. The tract at residues 260 to 382 is disordered; the sequence is GAAEAEAEPV…DVPLRPDDKT (123 aa). Positions 303–316 are enriched in low complexity; the sequence is VETAAPEVEGSPAD. The span at 317-336 shows a compositional bias: acidic residues; the sequence is TADEAEDTEAEEETEEEAPE. Positions 365–382 are enriched in basic and acidic residues; the sequence is EYRDEYGEDVPLRPDDKT.

Belongs to the halobacterial gas vesicle GvpC family. As to quaternary structure, forms homodimers, interacts with GvpF1, GvpH1, GvpI1, GvpL1, GvpN1 and GvpO1 via its C-terminus (residues 329-382).

The protein resides in the gas vesicle. It is found in the cytoplasm. Confers stability, involved in shaping gas vesicles. Gas vesicles are hollow, gas filled proteinaceous nanostructures found in several microbial planktonic microorganisms. They allow positioning of halobacteria at the optimal depth for growth in the poorly aerated, shallow brine pools of their habitat. In terms of biological role, expression of a 9.5 kb p-vac DNA fragment containing 2 divergently transcribed regions (gvpD-gvpE-gvpF-gvpG-gvpH-gvpI-gvpJ-gvpK-gvpL-gvpM and gvpA-gvpC-gvpN-gvpO) allows H.volcanii to produce gas vesicles. A similar region restores gas vesicle production in H.halobium without the p-vac locus, but it still has the c-vac locus. This Halobacterium salinarum (strain ATCC 700922 / JCM 11081 / NRC-1) (Halobacterium halobium) protein is Gas vesicle protein C1 (gvpC1).